The primary structure comprises 451 residues: Exodeoxyribonuclease 7 large subunit (451 aa).

The protein belongs to the XseA family. As to quaternary structure, heterooligomer composed of large and small subunits.

It localises to the cytoplasm. The catalysed reaction is Exonucleolytic cleavage in either 5'- to 3'- or 3'- to 5'-direction to yield nucleoside 5'-phosphates.. Bidirectionally degrades single-stranded DNA into large acid-insoluble oligonucleotides, which are then degraded further into small acid-soluble oligonucleotides. This Neisseria gonorrhoeae (strain ATCC 700825 / FA 1090) protein is Exodeoxyribonuclease 7 large subunit.